The sequence spans 1344 residues: Regulatory-associated protein of TOR 1 (1344 aa).

The span at 28-44 (CVSSHDDGDSRRKDSEA) shows a compositional bias: basic and acidic residues. Disordered stretches follow at residues 28–56 (CVSS…GTTE) and 771–818 (ASTD…DSVS). Low complexity predominate over residues 785–816 (SSSPLGSSGLMQGSPLSDDSSLHSDSGMMHDS). 7 WD repeats span residues 1025–1064 (RFET…LLNG), 1070–1111 (FPDK…GKQK), 1125–1164 (GARD…LVRS), 1168–1208 (ESEC…PLVC), 1214–1255 (QKVE…DTYL), 1259–1298 (AHRG…LGII), and 1307–1344 (QKIG…SQAR).

It belongs to the WD repeat RAPTOR family. Interacts with TOR, ATPK1 and ML1. Interacts with KIN10. Post-translationally, phosphorylated by KIN10. Expressed in roots, leaves, flowers and seeds.

It is found in the cytoplasm. In terms of biological role, probable component of the plant TOR kinase pathway that recruits substrates for TOR. Modulates plant cell growth and regulates the activity of ATPK1 kinase in response to osmotic stress. This chain is Regulatory-associated protein of TOR 1 (RAPTOR1), found in Arabidopsis thaliana (Mouse-ear cress).